We begin with the raw amino-acid sequence, 961 residues long: Phosphofurin acidic cluster sorting protein 1 (961 aa).

The span at methionine 1–serine 19 shows a compositional bias: gly residues. 2 disordered regions span residues methionine 1–threonine 70 and valine 76–alanine 95. Alanine 2 carries the N-acetylalanine modification. Positions glutamine 20–glutamine 30 are enriched in low complexity. A Phosphoserine modification is found at serine 28. Positions glutamine 31 to proline 46 are enriched in pro residues. Threonine 44 is subject to Phosphothreonine. Residues alanine 51 to threonine 70 show a composition bias toward low complexity. Tyrosine 249 bears the Phosphotyrosine mark. Residues glycine 260–aspartate 271 show a composition bias toward basic and acidic residues. 2 disordered regions span residues glycine 260–glutamine 297 and asparagine 375–threonine 426. The segment covering asparagine 274–aspartate 291 has biased composition (acidic residues). Residues histidine 351–asparagine 375 are a coiled coil. Residues serine 377 and serine 379 each carry the phosphoserine modification. Positions methionine 404–threonine 426 are enriched in polar residues. 2 positions are modified to phosphoserine: serine 428 and serine 493. 2 disordered regions span residues glutamate 475 to glutamine 540 and serine 758 to serine 802. Threonine 502 carries the post-translational modification Phosphothreonine. 5 positions are modified to phosphoserine: serine 517, serine 526, serine 527, serine 529, and serine 532. A compositionally biased stretch (low complexity) spans serine 768–serine 802.

This sequence belongs to the PACS family. In terms of assembly, associates with AP-1 and AP-3 but not with AP-2 complexes. Interacts with FURIN. Forms a ternary complex with furin and AP-1. Interacts with PKD2 (via acidic region). Interacts with SORL1. Interacts with WDR37.

It localises to the golgi apparatus. It is found in the trans-Golgi network. In terms of biological role, coat protein that is involved in the localization of trans-Golgi network (TGN) membrane proteins that contain acidic cluster sorting motifs. Controls the endosome-to-Golgi trafficking of furin and mannose-6-phosphate receptor by connecting the acidic-cluster-containing cytoplasmic domain of these molecules with the adapter-protein complex-1 (AP-1) of endosomal clathrin-coated membrane pits. Required for normal ER Ca2+ handling in lymphocytes. Together with WDR37, it plays an essential role in lymphocyte development, quiescence and survival. Required for stabilizing peripheral lymphocyte populations. This is Phosphofurin acidic cluster sorting protein 1 (Pacs1) from Rattus norvegicus (Rat).